The sequence spans 335 residues: Nonaprenyl diphosphate synthase (335 aa).

Lysine 57, arginine 60, and histidine 90 together coordinate isopentenyl diphosphate. Residues aspartate 97 and aspartate 101 each coordinate Mg(2+). The short motif at 97 to 101 (DDVMD) is the DDXXD motif element. Position 107 (arginine 107) interacts with isopentenyl diphosphate. The DDXXD motif motif lies at 223–227 (DDIID).

This sequence belongs to the FPP/GGPP synthase family. The cofactor is Mg(2+).

It catalyses the reaction isopentenyl diphosphate + (2E)-geranyl diphosphate = (2E,6E)-farnesyl diphosphate + diphosphate. It carries out the reaction isopentenyl diphosphate + (2E,6E)-farnesyl diphosphate = (2E,6E,10E)-geranylgeranyl diphosphate + diphosphate. The catalysed reaction is 5 isopentenyl diphosphate + (2E,6E,10E)-geranylgeranyl diphosphate = all-trans-nonaprenyl diphosphate + 5 diphosphate. Its pathway is isoprenoid biosynthesis; farnesyl diphosphate biosynthesis; farnesyl diphosphate from geranyl diphosphate and isopentenyl diphosphate. It participates in isoprenoid biosynthesis; geranylgeranyl diphosphate biosynthesis; geranylgeranyl diphosphate from farnesyl diphosphate and isopentenyl diphosphate: step 1/1. In terms of biological role, catalyzes the sequential condensations of isopentenyl pyrophosphate (IPP) with geranyl diphosphate (GPP) to yield (2E,6E)-farnesyl diphosphate (E,E-FPP), with E,E-FPP to yield geranylgeranyl diphosphate (GGPP) and with GGPP to yield nonaprenyl diphosphate. May also have weak activity with dimethylallyl diphosphate (DMAPP). The protein is Nonaprenyl diphosphate synthase of Mycobacterium tuberculosis (strain ATCC 25618 / H37Rv).